Consider the following 288-residue polypeptide: 33 kDa chaperonin (288 aa).

Intrachain disulfides connect Cys-236/Cys-238 and Cys-269/Cys-272.

It belongs to the HSP33 family. Post-translationally, under oxidizing conditions two disulfide bonds are formed involving the reactive cysteines. Under reducing conditions zinc is bound to the reactive cysteines and the protein is inactive.

Its subcellular location is the cytoplasm. Redox regulated molecular chaperone. Protects both thermally unfolding and oxidatively damaged proteins from irreversible aggregation. Plays an important role in the bacterial defense system toward oxidative stress. In Lactococcus lactis subsp. cremoris (strain SK11), this protein is 33 kDa chaperonin.